The following is a 77-amino-acid chain: UPF0337 protein CE0198 (77 aa).

The interval 1–77 (MGDLSNKAEG…PDVEHPEAVN (77 aa)) is disordered. Composition is skewed to basic and acidic residues over residues 30–56 (DEGR…KDGA) and 64–77 (QDKD…EAVN).

The protein belongs to the UPF0337 (CsbD) family.

This chain is UPF0337 protein CE0198, found in Corynebacterium efficiens (strain DSM 44549 / YS-314 / AJ 12310 / JCM 11189 / NBRC 100395).